A 298-amino-acid chain; its full sequence is Elongation factor Ts (298 aa).

The interval 79–82 is involved in Mg(2+) ion dislocation from EF-Tu; sequence TDFV.

The protein belongs to the EF-Ts family.

It is found in the cytoplasm. Associates with the EF-Tu.GDP complex and induces the exchange of GDP to GTP. It remains bound to the aminoacyl-tRNA.EF-Tu.GTP complex up to the GTP hydrolysis stage on the ribosome. The protein is Elongation factor Ts of Cereibacter sphaeroides (strain ATCC 17025 / ATH 2.4.3) (Rhodobacter sphaeroides).